A 298-amino-acid chain; its full sequence is Mitochondrial dicarboxylate transporter (298 aa).

3 Solcar repeats span residues 11-95, 103-195, and 205-289; these read KNIK…LKEN, TNMA…FKNY, and SKNY…LKKH. A run of 6 helical transmembrane segments spans residues 17–37, 58–76, 105–126, 170–189, 211–231, and 265–283; these read WWYG…LDLA, ILAN…AAVL, MAYL…GNFA, GWKP…VVTY, LTAS…ADVM, and WLPS…FFAI.

This sequence belongs to the mitochondrial carrier (TC 2.A.29) family. As to quaternary structure, homodimer. Binds to the TIM22 translocation complex during import.

Its subcellular location is the mitochondrion inner membrane. In terms of biological role, mitochondrial dicarboxylic transporter catalyzing the exchange of dicarboxylic acids like malate and succinate for inorganic phosphate. Required for growth on ethanol and acetate. The protein is Mitochondrial dicarboxylate transporter (DIC1) of Saccharomyces cerevisiae (strain ATCC 204508 / S288c) (Baker's yeast).